The chain runs to 632 residues: Sporulenol synthase (632 aa).

Aspartate 377 (proton donor) is an active-site residue. 3 PFTB repeats span residues 395-436, 465-505, and 513-554; these read WERG…EDAA, IQRA…HACG, and IQKA…VQTA.

This sequence belongs to the terpene cyclase/mutase family.

It localises to the cell membrane. The catalysed reaction is sporulenol = (R)-tetraprenyl-beta-curcumene + H2O. The protein operates within secondary metabolite biosynthesis; hopanoid biosynthesis. Functionally, catalyzes the cyclization of tetraprenyl beta-curcumene into sporulenol. The sequence is that of Sporulenol synthase (sqhC) from Bacillus subtilis (strain 168).